Here is a 166-residue protein sequence, read N- to C-terminus: Endoribonuclease YbeY (166 aa).

3 residues coordinate Zn(2+): His-125, His-129, and His-135.

The protein belongs to the endoribonuclease YbeY family. Zn(2+) is required as a cofactor.

The protein resides in the cytoplasm. Its function is as follows. Single strand-specific metallo-endoribonuclease involved in late-stage 70S ribosome quality control and in maturation of the 3' terminus of the 16S rRNA. This chain is Endoribonuclease YbeY, found in Alkalilimnicola ehrlichii (strain ATCC BAA-1101 / DSM 17681 / MLHE-1).